The primary structure comprises 349 residues: 4-hydroxy-2-oxovalerate aldolase 2 (349 aa).

The Pyruvate carboxyltransferase domain maps to V12–A264. R20–D21 provides a ligand contact to substrate. Position 21 (D21) interacts with Mn(2+). H24 serves as the catalytic Proton acceptor. Substrate contacts are provided by S174 and H203. The Mn(2+) site is built by H203 and H205. Residue Y294 coordinates substrate.

Belongs to the 4-hydroxy-2-oxovalerate aldolase family.

The enzyme catalyses (S)-4-hydroxy-2-oxopentanoate = acetaldehyde + pyruvate. This chain is 4-hydroxy-2-oxovalerate aldolase 2 (bphI-2), found in Mycolicibacterium smegmatis (strain ATCC 700084 / mc(2)155) (Mycobacterium smegmatis).